Consider the following 170-residue polypeptide: Regulator of ribonuclease activity A (170 aa).

Belongs to the RraA family. In terms of assembly, homotrimer. Binds to both RNA-binding sites in the C-terminal region of Rne and to RhlB.

Its subcellular location is the cytoplasm. Globally modulates RNA abundance by binding to RNase E (Rne) and regulating its endonucleolytic activity. Can modulate Rne action in a substrate-dependent manner by altering the composition of the degradosome. Modulates RNA-binding and helicase activities of the degradosome. The protein is Regulator of ribonuclease activity A of Psychromonas ingrahamii (strain DSM 17664 / CCUG 51855 / 37).